A 618-amino-acid chain; its full sequence is 1-deoxy-D-xylulose-5-phosphate synthase (618 aa).

Thiamine diphosphate contacts are provided by residues His77 and 118–120; that span reads GHS. A Mg(2+)-binding site is contributed by Asp149. Thiamine diphosphate contacts are provided by residues 150-151, Asn178, Tyr285, and Glu367; that span reads GA. Asn178 contacts Mg(2+).

It belongs to the transketolase family. DXPS subfamily. As to quaternary structure, homodimer. It depends on Mg(2+) as a cofactor. Thiamine diphosphate serves as cofactor.

It carries out the reaction D-glyceraldehyde 3-phosphate + pyruvate + H(+) = 1-deoxy-D-xylulose 5-phosphate + CO2. Its pathway is metabolic intermediate biosynthesis; 1-deoxy-D-xylulose 5-phosphate biosynthesis; 1-deoxy-D-xylulose 5-phosphate from D-glyceraldehyde 3-phosphate and pyruvate: step 1/1. Functionally, catalyzes the acyloin condensation reaction between C atoms 2 and 3 of pyruvate and glyceraldehyde 3-phosphate to yield 1-deoxy-D-xylulose-5-phosphate (DXP). The protein is 1-deoxy-D-xylulose-5-phosphate synthase of Idiomarina loihiensis (strain ATCC BAA-735 / DSM 15497 / L2-TR).